Consider the following 157-residue polypeptide: MKRLFMKASLVLFAVVFVFAVKGAPAKAETHAYDGKSPYYNDCASSGSTKKSSNLVNASNQVIGVVELKFSSTCKTAWAKITMNNTLTSGYEANAEITRNTDGKRYNCDSAGGNGKAVAGQKSCYTPMVYDLDPRTSYAFGKYSGPNLNVWATTGSY.

Positions 1–28 are cleaved as a signal peptide; it reads MKRLFMKASLVLFAVVFVFAVKGAPAKA.

This is an uncharacterized protein from Bacillus subtilis (strain 168).